Reading from the N-terminus, the 145-residue chain is Selenoprotein M (145 aa).

The signal sequence occupies residues 1–23 (MSLLLPPLALLLLLAALVAPATA). Active-site nucleophile residues include Cys45 and Sec48. The segment at residues 45-48 (CGGU) is a cross-link (cysteinyl-selenocysteine (Cys-Sec)). A non-standard amino acid (selenocysteine) is located at residue Sec48.

This sequence belongs to the selenoprotein M/F family. Widely expressed.

The protein localises to the cytoplasm. It is found in the perinuclear region. Its subcellular location is the endoplasmic reticulum. It localises to the golgi apparatus. In terms of biological role, may function as a thiol-disulfide oxidoreductase that participates in disulfide bond formation. This chain is Selenoprotein M, found in Homo sapiens (Human).